Consider the following 331-residue polypeptide: Probable allantoicase (331 aa).

The protein belongs to the allantoicase family.

The enzyme catalyses allantoate + H2O = (S)-ureidoglycolate + urea. It participates in nitrogen metabolism; (S)-allantoin degradation; (S)-ureidoglycolate from allantoate (aminidohydrolase route): step 1/1. The sequence is that of Probable allantoicase from Pseudomonas syringae pv. tomato (strain ATCC BAA-871 / DC3000).